The following is a 187-amino-acid chain: MNLDDKSLFLDAMEDVQPLKRATDVHWHPTRNQRAPQRIDTLQLDNFLTTGFLDIIPLSQPLEFRREGLQHGVLDKLRSGKYPQQASLNLLRQPVEECRKMVFSFIQQALADGLRNVLIIHGKGRDDKSHANIVRSYVARWLTEFDDVQAYCTALPHHGGSGACYVALRKTAQAKQENWERHAKRSR.

The Smr domain occupies 88–169 (LNLLRQPVEE…GSGACYVALR (82 aa)).

Its function is as follows. Has DNA endonuclease activity. Binds DNA. In Escherichia coli (strain K12), this protein is Probable DNA endonuclease SmrA (smrA).